We begin with the raw amino-acid sequence, 172 residues long: Peptide deformylase-like (172 aa).

The active site involves glutamate 134.

This sequence belongs to the polypeptide deformylase family.

The polypeptide is Peptide deformylase-like (Rhizobium meliloti (strain 1021) (Ensifer meliloti)).